The sequence spans 276 residues: Chymotrypsin (276 aa).

Residues 1–16 form the signal peptide; it reads MKVALVVLALFGVSLA. Residues 17 to 45 constitute a propeptide, activation peptide; it reads ASIDNIEIPPSKNIYVEPINQPEVDPSLE. The 227-residue stretch at 46-272 folds into the Peptidase S1 domain; the sequence is IVNGQEVVPH…YLNWLQTHSE (227 aa). Cysteine 74 and cysteine 90 are oxidised to a cystine. Residues histidine 89 and aspartate 135 each act as charge relay system in the active site. Residues asparagine 144 and asparagine 193 are each glycosylated (N-linked (GlcNAc...) asparagine). 2 disulfide bridges follow: cysteine 202–cysteine 215 and cysteine 225–cysteine 250. Catalysis depends on serine 229, which acts as the Charge relay system.

It belongs to the peptidase S1 family. Expressed in larval carcasses and gut, and adult gut.

Its subcellular location is the secreted. The protein localises to the extracellular space. It catalyses the reaction Preferential cleavage: Tyr-|-Xaa, Trp-|-Xaa, Phe-|-Xaa, Leu-|-Xaa.. In terms of biological role, serine protease with chymotryptic and collagenolytic activities. The sequence is that of Chymotrypsin from Phaedon cochleariae (Mustard beetle).